Reading from the N-terminus, the 717-residue chain is Delta-1-pyrroline-5-carboxylate synthase (717 aa).

Residues 1 to 296 (MDAVDSTRAF…WAPVGDVGAR (296 aa)) are glutamate 5-kinase. Substrate-binding residues include S60, D157, and N176. ATP contacts are provided by residues 196–197 (SD) and 236–242 (RGGMTAK). The segment at 297 to 717 (DMAVAARESS…YTHKDLTSHA (421 aa)) is gamma-glutamyl phosphate reductase.

It in the N-terminal section; belongs to the glutamate 5-kinase family. The protein in the C-terminal section; belongs to the gamma-glutamyl phosphate reductase family. Expressed at high levels in leaves and is inducible in roots subjected to salt stress.

The enzyme catalyses L-glutamate + ATP = L-glutamyl 5-phosphate + ADP. It catalyses the reaction L-glutamate 5-semialdehyde + phosphate + NADP(+) = L-glutamyl 5-phosphate + NADPH + H(+). It participates in amino-acid biosynthesis; L-proline biosynthesis; L-glutamate 5-semialdehyde from L-glutamate: step 1/2. The protein operates within amino-acid biosynthesis; L-proline biosynthesis; L-glutamate 5-semialdehyde from L-glutamate: step 2/2. With respect to regulation, feedback regulated by proline. P5CS plays a key role in proline biosynthesis, leading to osmoregulation in plants. This is Delta-1-pyrroline-5-carboxylate synthase from Actinidia deliciosa (Kiwi).